A 148-amino-acid polypeptide reads, in one-letter code: Vascular endothelial growth factor homolog (148 aa).

Residues 1–25 (MKLTATLQVVVALLICMYNLPECVS) form the signal peptide. 3 disulfides stabilise this stretch: Cys46-Cys88, Cys77-Cys130, and Cys81-Cys132. The N-linked (GlcNAc...) asparagine; by host glycan is linked to Asn95.

The protein belongs to the PDGF/VEGF growth factor family. In terms of assembly, homodimer; disulfide-linked.

It is found in the secreted. Its function is as follows. Induces endothelial proliferation. This chain is Vascular endothelial growth factor homolog, found in Orf virus (strain NZ7) (OV NZ-7).